Reading from the N-terminus, the 181-residue chain is Keratin-associated protein 4-5 (181 aa).

26 consecutive repeat copies span residues 5–9 (CCGSV), 20–24 (CCRPS), 25–29 (CCQTT), 30–34 (CCRTT), 35–39 (CCRPS), 40–44 (CCKPQ), 45–49 (CCQSV), 55–59 (CCHPS), 60–64 (CCISS), 65–69 (CCRPY), 70–74 (CCESS), 75–79 (CCRPC), 80–84 (CCQTT), 85–89 (CCRTT), 90–94 (CCRTT), 95–99 (CCCPS), 100–104 (CCVSS), 105–109 (CCRPQ), 110–114 (CCQSV), 115–119 (CCQPT), 120–124 (CCRPS), 125–129 (CCISS), 130–134 (CCHPS), 135–139 (CCESS), 140–144 (CCRPC), and 145–149 (CCVRP). Residues 5–154 (CCGSVSSEQS…CCVRPVCGRV (150 aa)) form a 26 X 5 AA repeats of C-C-[GRQVCHIEK]-[SPTR]-[VSTQYC] region.

It belongs to the KRTAP type 4 family. In terms of assembly, interacts with hair keratins. As to expression, expressed in the hair follicles.

In the hair cortex, hair keratin intermediate filaments are embedded in an interfilamentous matrix, consisting of hair keratin-associated proteins (KRTAP), which are essential for the formation of a rigid and resistant hair shaft through their extensive disulfide bond cross-linking with abundant cysteine residues of hair keratins. The matrix proteins include the high-sulfur and high-glycine-tyrosine keratins. The polypeptide is Keratin-associated protein 4-5 (KRTAP4-5) (Homo sapiens (Human)).